Here is a 110-residue protein sequence, read N- to C-terminus: UPF0122 protein lmo1802 (110 aa).

Belongs to the UPF0122 family.

Might take part in the signal recognition particle (SRP) pathway. This is inferred from the conservation of its genetic proximity to ftsY/ffh. May be a regulatory protein. This chain is UPF0122 protein lmo1802, found in Listeria monocytogenes serovar 1/2a (strain ATCC BAA-679 / EGD-e).